A 155-amino-acid polypeptide reads, in one-letter code: Large ribosomal subunit protein bL17 (155 aa).

This sequence belongs to the bacterial ribosomal protein bL17 family. In terms of assembly, part of the 50S ribosomal subunit. Contacts protein L32.

The protein is Large ribosomal subunit protein bL17 of Bifidobacterium adolescentis (strain ATCC 15703 / DSM 20083 / NCTC 11814 / E194a).